Consider the following 479-residue polypeptide: ATP-dependent protease ATPase subunit HslU (479 aa).

ATP is bound by residues isoleucine 32, 74 to 79 (GVGKTE), aspartate 290, glutamate 355, and arginine 427.

Belongs to the ClpX chaperone family. HslU subfamily. As to quaternary structure, a double ring-shaped homohexamer of HslV is capped on each side by a ring-shaped HslU homohexamer. The assembly of the HslU/HslV complex is dependent on binding of ATP.

It localises to the cytoplasm. Functionally, ATPase subunit of a proteasome-like degradation complex; this subunit has chaperone activity. The binding of ATP and its subsequent hydrolysis by HslU are essential for unfolding of protein substrates subsequently hydrolyzed by HslV. HslU recognizes the N-terminal part of its protein substrates and unfolds these before they are guided to HslV for hydrolysis. The chain is ATP-dependent protease ATPase subunit HslU from Leptospira interrogans serogroup Icterohaemorrhagiae serovar Lai (strain 56601).